The chain runs to 252 residues: Triosephosphate isomerase (252 aa).

9 to 11 (NWK) contributes to the substrate binding site. Catalysis depends on His96, which acts as the Electrophile. Glu168 (proton acceptor) is an active-site residue. Substrate-binding positions include Gly174, Ser214, and 235–236 (GG).

The protein belongs to the triosephosphate isomerase family. Homodimer.

It is found in the cytoplasm. It catalyses the reaction D-glyceraldehyde 3-phosphate = dihydroxyacetone phosphate. The protein operates within carbohydrate biosynthesis; gluconeogenesis. It functions in the pathway carbohydrate degradation; glycolysis; D-glyceraldehyde 3-phosphate from glycerone phosphate: step 1/1. Functionally, involved in the gluconeogenesis. Catalyzes stereospecifically the conversion of dihydroxyacetone phosphate (DHAP) to D-glyceraldehyde-3-phosphate (G3P). The polypeptide is Triosephosphate isomerase (Chloroherpeton thalassium (strain ATCC 35110 / GB-78)).